Reading from the N-terminus, the 371-residue chain is S-adenosylmethionine:tRNA ribosyltransferase-isomerase (371 aa).

The protein belongs to the QueA family. As to quaternary structure, monomer.

It localises to the cytoplasm. It catalyses the reaction 7-aminomethyl-7-carbaguanosine(34) in tRNA + S-adenosyl-L-methionine = epoxyqueuosine(34) in tRNA + adenine + L-methionine + 2 H(+). It functions in the pathway tRNA modification; tRNA-queuosine biosynthesis. Transfers and isomerizes the ribose moiety from AdoMet to the 7-aminomethyl group of 7-deazaguanine (preQ1-tRNA) to give epoxyqueuosine (oQ-tRNA). This chain is S-adenosylmethionine:tRNA ribosyltransferase-isomerase, found in Nitratidesulfovibrio vulgaris (strain DP4) (Desulfovibrio vulgaris).